The primary structure comprises 412 residues: Serine hydroxymethyltransferase (412 aa).

(6S)-5,6,7,8-tetrahydrofolate is bound by residues L117 and 121–123 (GHL). At K226 the chain carries N6-(pyridoxal phosphate)lysine. (6S)-5,6,7,8-tetrahydrofolate-binding positions include E242 and 350–352 (SPF).

This sequence belongs to the SHMT family. As to quaternary structure, homodimer. Requires pyridoxal 5'-phosphate as cofactor.

Its subcellular location is the cytoplasm. It carries out the reaction (6R)-5,10-methylene-5,6,7,8-tetrahydrofolate + glycine + H2O = (6S)-5,6,7,8-tetrahydrofolate + L-serine. It participates in one-carbon metabolism; tetrahydrofolate interconversion. Its pathway is amino-acid biosynthesis; glycine biosynthesis; glycine from L-serine: step 1/1. Functionally, catalyzes the reversible interconversion of serine and glycine with tetrahydrofolate (THF) serving as the one-carbon carrier. Also exhibits THF-independent aldolase activity toward beta-hydroxyamino acids, producing glycine and aldehydes, via a retro-aldol mechanism. The sequence is that of Serine hydroxymethyltransferase from Methanosarcina acetivorans (strain ATCC 35395 / DSM 2834 / JCM 12185 / C2A).